Here is a 504-residue protein sequence, read N- to C-terminus: Histidine ammonia-lyase (504 aa).

The segment at residues 142 to 144 (ASG) is a cross-link (5-imidazolinone (Ala-Gly)). Position 143 is a 2,3-didehydroalanine (Ser) (S143).

Belongs to the PAL/histidase family. Contains an active site 4-methylidene-imidazol-5-one (MIO), which is formed autocatalytically by cyclization and dehydration of residues Ala-Ser-Gly.

It localises to the cytoplasm. It carries out the reaction L-histidine = trans-urocanate + NH4(+). Its pathway is amino-acid degradation; L-histidine degradation into L-glutamate; N-formimidoyl-L-glutamate from L-histidine: step 1/3. This chain is Histidine ammonia-lyase, found in Staphylococcus aureus (strain USA300).